Consider the following 193-residue polypeptide: Large ribosomal subunit protein bL9 (193 aa).

The segment at 155–193 is disordered; it reads AEGETLTSAEAIYDIQEKPLAENQEEMNDNDANSINEQA. Residues 184-193 show a composition bias toward polar residues; sequence NDANSINEQA.

Belongs to the bacterial ribosomal protein bL9 family.

Functionally, binds to the 23S rRNA. This chain is Large ribosomal subunit protein bL9, found in Bartonella quintana (strain Toulouse) (Rochalimaea quintana).